Consider the following 268-residue polypeptide: Nuclear protein UL4 homolog (268 aa).

This sequence belongs to the alphaherpesvirinae HHV-1 UL4 family.

It is found in the host nucleus. The chain is Nuclear protein UL4 homolog (MDV016) from Gallid herpesvirus 2 (strain Chicken/Md5/ATCC VR-987) (GaHV-2).